Consider the following 1732-residue polypeptide: MRKLLLLIAASLLGVGLYAQSAKIKLDAPTTRTTCTNNSFKQFDASFSFNEVELTKVETKGGTFASVSIPGAFPTGEVGSPEVPAVRKLIAVPVGATPVVRVKSFTEQVYSLNQYGSEKLMPHQPSMSKSDDPEKVPFVYNAAAYARKGFVGQELTQVEMLGTMRGVRIAALTINPVQYDVVANQLKVRNNIEIEVSFQGADEVATQRLYDASFSPYFETAYKQLFNRDVYTDHGDLYNTPVRMLVVAGAKFKEALKPWLTWKAQKGFYLDVHYTDEAEVGTTNASIKAFIHKKYNDGLAASAAPVFLALVGDTDVISGEKGKKTKKVTDLYYSAVDGDYFPEMYTFRMSASSPEELTNIIDKVLMYEKATMPDKSYLEKVLLIAGADYSWNSQVGQPTIKYGMQYYYNQEHGYTDVYNYLKAPYTGCYSHLNTGVSFANYTAHGSETAWADPLLTTSQLKALTNKDKYFLAIGNCCITAQFDYVQPCFGEVITRVKEKGAYAYIGSSPNSYWGEDYYWSVGANAVFGVQPTFEGTSMGSYDATFLEDSYNTVNSIMWAGNLAATHAGNIGNITHIGAHYYWEAYHVLGDGSVMPYRAMPKTNTYTLPASLPQNQASYSIQASAGSYVAISKDGVLYGTGVANASGVATVSMTKQITENGNYDVVITRSNYLPVIKQIQVGEPSPYQPVSNLTATTQGQKVTLKWEAPSAKKAEGSREVKRIGDGLFVTIEPANDVRANEAKVVLAADNVWGDNTGYQFLLDADHNTFGSVIPATGPLFTGTASSNLYSANFEYLVPANADPVVTTQNIIVTGQGEVVIPGGVYDYCITNPEPASGKMWIAGDGGNQPARYDDFTFEAGKKYTFTMRRAGMGDGTDMEVEDDSPASYTYTVYRDGTKIKEGLTATTFEEDGVAAGNHEYCVEVKYTAGVSPKVCKDVTVEGSNEFAPVQNLTGSSVGQKVTLKWDAPNGTPNPNPNPNPNPGTTLSESFENGIPASWKTIDADGDGHGWKPGNAPGIAGYNSNGCVYSESFGLGGIGVLTPDNYLITPALDLPNGGKLTFWVCAQDANYASEHYAVYASSTGNDASNFTNALLEETITAKGVRSPKAIRGRIQGTWRQKTVDLPAGTKYVAFRHFQSTDMFYIDLDEVEIKANGKRADFTETFESSTHGEAPAEWTTIDADGDGQGWLCLSSGQLDWLTAHGGSNVVSSFSWNGMALNPDNYLISKDVTGATKVKYYYAVNDGFPGDHYAVMISKTGTNAGDFTVVFEETPNGINKGGARFGLSTEANGAKPQSVWIERTVDLPAGTKYVAFRHYNCSDLNYILLDDIQFTMGGSPTPTDYTYTVYRDGTKIKEGLTETTFEEDGVATGNHEYCVEVKYTAGVSPKKCVDVTVNSTQFNPVQNLTAEQAPNSMDAILKWNAPASKRAEVLNEDFENGIPASWKTIDADGDGNNWTTTPPPGGSSFAGHNSAICVSSASHINFEGPQNPDNYLVTPELSLPGGGTLTFWVCAQDANYASEHYAVYASSTGNDASNFANALLEEVLTAKTVVTAPEAIRGTRAQGTWYQKTVQLPAGTKYVAFRHFGCTDFFWINLDDVVITSGNAPSYTYTIYRNNTQIASGVTETTYRDPDLATGFYTYGVKVVYPNGESAIETATLNITSLADVTAQKPYTLTVVGKTITVTCQGEAMIYDMNGRRLAAGRNTVVYTAQGGHYAVMVVVDGKSYVEKLAVK.

Positions 1-24 (MRKLLLLIAASLLGVGLYAQSAKI) are cleaved as a signal peptide. A propeptide spanning residues 25-228 (KLDAPTTRTT…ETAYKQLFNR (204 aa)) is cleaved from the precursor. 5 residues coordinate Ca(2+): D313, D337, D339, F341, and E343. The active-site Proton donor is H444. The active-site Nucleophile is the C477. Positions 482 and 491 each coordinate Ca(2+). The disordered stretch occupies residues 965–988 (DAPNGTPNPNPNPNPNPGTTLSES). Residues 970-980 (TPNPNPNPNPN) are compositionally biased toward pro residues. 21 residues coordinate Ca(2+): S988, E990, D1001, D1003, D1005, H1007, S1022, G1024, N1043, D1146, E1147, D1433, E1435, D1446, D1448, D1450, N1452, S1470, I1472, N1490, and D1595.

This sequence belongs to the peptidase C25 family. In terms of processing, proteolytically cleaved into a catalytic subunit and three adhesins. Arg-gingipain is involved in this post-translational processing.

The protein resides in the secreted. The catalysed reaction is Endopeptidase with strict specificity for lysyl bonds.. Functionally, cysteine proteinase with a strong preference for substrates with Lys in the P1 position. Hydrolyzes bovine hemoglobin, bovine serum albumin, casein, human placental type I collagen and human IgA and IgG. Disrupts the functions of polymorphonuclear leukocytes. May act as a virulence factor in the development of peridontal disease. Involved in the coaggregation of P.gingivalis with other oral bacteria. Has hemolytic activity; this is mediated by the adhesin domains and does not require the catalytic domain. The chain is Lys-gingipain W83 from Porphyromonas gingivalis (Bacteroides gingivalis).